We begin with the raw amino-acid sequence, 2116 residues long: Myosin-2 heavy chain (2116 aa).

The 53-residue stretch at 30–82 (SDKRYIWYNPDPKERDSYECGEIVSETSDSFTFKTVDGQDRQVKKDDANQRNP) folds into the Myosin N-terminal SH3-like domain. Residues 86-759 (DGVEDMSELS…QLARIEEARE (674 aa)) enclose the Myosin motor domain. Residue K130 is modified to N6,N6-dimethyllysine. Residue 179-186 (GESGAGKT) coordinates ATP. Actin-binding regions lie at residues 638–660 (LASLMATLETTNPHFVRCIIPNN) and 738–752 (RFGITKIFFRAGQLA). Residues 762 to 791 (ISEIIKAIQAATRGWIARKVYKQAREHTVA) enclose the IQ domain. Residues 817–2116 (ARPLLKRRNF…MADFFGGFKA (1300 aa)) adopt a coiled-coil conformation. 6 disordered regions span residues 1295 to 1314 (VNEQLEEEKKQKESNEKRKV), 1363 to 1399 (DKSVEQLKTLQAKNEELRNTAEEAEGQLDRAERSKKK), 1415 to 1444 (TAKKVKAEKAMKKAETDYRSTKSELDDAKN), 1711 to 1731 (VRDQLEEEEDSRSELEDSKRR), 1771 to 1791 (LEDEKKKLNESERAKKRLESE), and 1805 to 1844 (NRSRAEKDRKKYEKDLKDTKYKLNDEAATKTQTEIGAAKL). Composition is skewed to basic and acidic residues over residues 1375-1399 (KNEELRNTAEEAEGQLDRAERSKKK), 1415-1443 (TAKKVKAEKAMKKAETDYRSTKSELDDAK), and 1722-1731 (RSELEDSKRR). Basic and acidic residues predominate over residues 1805-1832 (NRSRAEKDRKKYEKDLKDTKYKLNDEAA). T1823, T1833, and T2029 each carry phosphothreonine; by MHCK.

The protein belongs to the TRAFAC class myosin-kinesin ATPase superfamily. Myosin family. In terms of assembly, myosin-2 heavy chain is two-headed. It self-assembles into filaments. Hexamer of 2 heavy chain subunits (MHC), 2 alkali light chain subunits (MLC) and 2 regulatory light chain subunits (MLC-2). Associates with elmoA. In terms of processing, phosphorylation inhibits thick filament formation and reduces the actin-activated ATPase activity.

It is found in the cytoplasm. It localises to the cell cortex. Its function is as follows. Myosin is a protein that binds to actin and has ATPase activity that is activated by actin. The protein is Myosin-2 heavy chain (mhcA) of Dictyostelium discoideum (Social amoeba).